A 1592-amino-acid polypeptide reads, in one-letter code: Serine/threonine-protein kinase mrck-1 (1592 aa).

Residues 1-954 (MAEPPPDDSA…IFSPVSISAM (954 aa)) are involved in homo-dimerization. The Protein kinase domain maps to 83-351 (FEVLKVIGKG…LSDFQLHPFF (269 aa)). Residues 89-97 (IGKGAFGEV) and Lys-112 contribute to the ATP site. Asp-207 functions as the Proton acceptor in the catalytic mechanism. Residues 352 to 426 (EGIDWNTIRD…THGSLLSDAR (75 aa)) enclose the AGC-kinase C-terminal domain. A Phosphoserine modification is found at Ser-415. The residue at position 416 (Tyr-416) is a Phosphotyrosine. 2 coiled-coil regions span residues 444–782 (ELME…KNNS) and 811–871 (LDLQ…IENS). The span at 782 to 796 (SPLTTSNYIQNTPSG) shows a compositional bias: polar residues. Residues 782–801 (SPLTTSNYIQNTPSGWGSRR) form a disordered region. An involved in binding to membranes, with a preference for di-phosphorylated phosphoinositides (PIPs) region spans residues 955–1534 (ERGHNFERMK…FRTIGKDDRS (580 aa)). The Phorbol-ester/DAG-type zinc finger occupies 957-1007 (GHNFERMKIKTPTKCGHCTSILIGLDRQGLFCQSCQYACHVSCAERVSQSC). Zn(2+) is bound by residues His-958, Cys-971, Cys-974, Cys-988, Cys-991, His-996, Cys-999, and Cys-1007. Positions 1026–1154 (GTAYEGLVKT…WVVALSELKT (129 aa)) constitute a PH domain. Residues 1181–1479 (IRVAQCCAII…KPLSGDGILS (299 aa)) form the CNH domain. One can recognise a CRIB domain in the interval 1544 to 1557 (ISTPSDFMHIVHMG). The involved in interaction with cdc-42 (GTP-bound). Deletion prevents rescue of a null mutant; furthermore deleted form of mrck-1 is no longer recruited to the cell cortex and instead appears to be completely cytoplasmic stretch occupies residues 1544-1557 (ISTPSDFMHIVHMG).

It belongs to the protein kinase superfamily. AGC Ser/Thr protein kinase family. DMPK subfamily. Homodimer, via N-terminal domains. Interacts (via the CRIB domain) with cdc-42 (GTP-bound), but with a lower affinity for cdc-42 bound to GDP; the interaction is direct and may play a role in the recruitment of mrck-1 to the apical membrane. Requires Mg(2+) as cofactor. As to expression, expressed in embryonic and L4 larval seam cells and in embryonic dorsal and ventral epidermal cells. Also expressed in the pharynx throughout development and in sublateral nerve cords in the L4 larva.

The protein resides in the cytoplasm. The protein localises to the cell cortex. The catalysed reaction is L-seryl-[protein] + ATP = O-phospho-L-seryl-[protein] + ADP + H(+). It carries out the reaction L-threonyl-[protein] + ATP = O-phospho-L-threonyl-[protein] + ADP + H(+). In terms of biological role, serine/threonine-protein kinase. Involved in regulating endoderm precursor cell movements during early gastrulation; activates apical myosin and thereby increases actomyosin contractility and tension in the apical cell cortex, probably as a result of recruitment of mrck-1 to the cortex by a combination of interaction with active cdc-42 and membrane binding. May phosphorylate and inactivate the phosphatase mel-11, and thereby contribute to the regulation of myosin II contractility during embryonic elongation. Involved in controlling canal length and Golgi/ER integrity during excretory canal elongation. This Caenorhabditis elegans protein is Serine/threonine-protein kinase mrck-1.